The primary structure comprises 118 residues: Group 1 truncated hemoglobin GlbN (118 aa).

H70 contacts heme.

Belongs to the truncated hemoglobin family. Group I subfamily. As to quaternary structure, monomer. Requires heme as cofactor.

It localises to the membrane. This chain is Group 1 truncated hemoglobin GlbN (glbN), found in Nostoc commune.